The following is a 196-amino-acid chain: ATP-dependent Clp protease proteolytic subunit (196 aa).

The active-site Nucleophile is serine 96. Residue histidine 121 is part of the active site.

The protein belongs to the peptidase S14 family. As to quaternary structure, fourteen ClpP subunits assemble into 2 heptameric rings which stack back to back to give a disk-like structure with a central cavity, resembling the structure of eukaryotic proteasomes.

The protein localises to the cytoplasm. The catalysed reaction is Hydrolysis of proteins to small peptides in the presence of ATP and magnesium. alpha-casein is the usual test substrate. In the absence of ATP, only oligopeptides shorter than five residues are hydrolyzed (such as succinyl-Leu-Tyr-|-NHMec, and Leu-Tyr-Leu-|-Tyr-Trp, in which cleavage of the -Tyr-|-Leu- and -Tyr-|-Trp bonds also occurs).. In terms of biological role, cleaves peptides in various proteins in a process that requires ATP hydrolysis. Has a chymotrypsin-like activity. Plays a major role in the degradation of misfolded proteins. This chain is ATP-dependent Clp protease proteolytic subunit, found in Streptococcus pneumoniae (strain ATCC 700669 / Spain 23F-1).